A 488-amino-acid polypeptide reads, in one-letter code: GTPase Der (488 aa).

EngA-type G domains follow at residues 3–166 and 193–366; these read PVIA…PRDP and IKIA…MSAV. Residues 9-16, 56-60, 118-121, 199-206, 246-250, and 311-314 contribute to the GTP site; these read GRPNVGKS, DTGGI, NKID, DTAGV, and NKWD. The region spanning 367–451 is the KH-like domain; it reads TRWPTSRLTQ…PIRIEYKGGD (85 aa). The segment covering 449 to 461 has biased composition (basic and acidic residues); that stretch reads GGDNPFEGKKNTL. A disordered region spans residues 449 to 488; it reads GGDNPFEGKKNTLTDRQVNKKRRLMSHHKKAEKKRRDKRK. Residues 467–488 are compositionally biased toward basic residues; the sequence is NKKRRLMSHHKKAEKKRRDKRK.

Belongs to the TRAFAC class TrmE-Era-EngA-EngB-Septin-like GTPase superfamily. EngA (Der) GTPase family. Associates with the 50S ribosomal subunit.

Its function is as follows. GTPase that plays an essential role in the late steps of ribosome biogenesis. The sequence is that of GTPase Der from Pseudomonas entomophila (strain L48).